The primary structure comprises 54 residues: Large ribosomal subunit protein bL33 (54 aa).

This sequence belongs to the bacterial ribosomal protein bL33 family.

This chain is Large ribosomal subunit protein bL33, found in Corynebacterium urealyticum (strain ATCC 43042 / DSM 7109).